A 663-amino-acid chain; its full sequence is MIDKRDDKPFKLKSKYKPSGDQPQAIESLVDNIEGGEKAQILLGATGTGKTYTMSQVISKVNKPTLVIAHNKTLAGQLYGEFKEFFPDNAVEYFVSYYDYYQPEAYVPSSDTYIEKDSSVNDEIDKLRHSATSSLLERNDVIVVASVSCIYGLGSPKEYADSAVSLRPGQEISRDTLLNQLVDIQFERNDIDFQRGCFRVRGDVVEVFPASRDEHAFRVEFFGDEIDRICEIESLTGKTIGEVDHLVLFPATHFVTNDEHMEQSIAKIQAELAEQLQLFESEGKLLEAQRLRQRTEYDIEMLREMGYTSGVENYSRHMDGRSPGEPPYTLLDFFPEDFLIMIDESHMTMGQIKGMYNGDQARKQMLVDYGFRLPSALDNRPLRREEFESHVHQIVYVSATPGEYEMSQTNTIIEQIIRPTGLLDPEIDVRSSMGQMDDLLGEINQRVARDERTFITTLTKKMAEDLTDYLKEMGVKVKYMHSDIKTLERTEIIRDLRLGIFDVLIGINLLREGIDVPEVSLVAILDADKEGFLRNERGLIQTIGRAARNVDGHVIMYADKMTDSMQRAIDETARRREIQIAYNKAHGIVPQTIKKDIRGLISISKTSHNDISKEEMDYESMSRGERKEAINALQKQMQEAAELLDFELAAQMRDLILELKLMD.

Residues 1 to 10 (MIDKRDDKPF) show a composition bias toward basic and acidic residues. A disordered region spans residues 1–23 (MIDKRDDKPFKLKSKYKPSGDQP). A Helicase ATP-binding domain is found at 31–271 (DNIEGGEKAQ…EQSIAKIQAE (241 aa)). Residue 44-51 (GATGTGKT) participates in ATP binding. The short motif at 97 to 120 (YYDYYQPEAYVPSSDTYIEKDSSV) is the Beta-hairpin element. A Helicase C-terminal domain is found at 435–601 (QMDDLLGEIN…TIKKDIRGLI (167 aa)). A UVR domain is found at 627–662 (KEAINALQKQMQEAAELLDFELAAQMRDLILELKLM).

This sequence belongs to the UvrB family. In terms of assembly, forms a heterotetramer with UvrA during the search for lesions. Interacts with UvrC in an incision complex.

The protein resides in the cytoplasm. In terms of biological role, the UvrABC repair system catalyzes the recognition and processing of DNA lesions. A damage recognition complex composed of 2 UvrA and 2 UvrB subunits scans DNA for abnormalities. Upon binding of the UvrA(2)B(2) complex to a putative damaged site, the DNA wraps around one UvrB monomer. DNA wrap is dependent on ATP binding by UvrB and probably causes local melting of the DNA helix, facilitating insertion of UvrB beta-hairpin between the DNA strands. Then UvrB probes one DNA strand for the presence of a lesion. If a lesion is found the UvrA subunits dissociate and the UvrB-DNA preincision complex is formed. This complex is subsequently bound by UvrC and the second UvrB is released. If no lesion is found, the DNA wraps around the other UvrB subunit that will check the other stand for damage. The chain is UvrABC system protein B from Streptococcus pyogenes serotype M4 (strain MGAS10750).